Here is a 479-residue protein sequence, read N- to C-terminus: Cobyric acid synthase (479 aa).

The region spanning 250–442 (TRTVAVVAYP…LHGLFEDAAA (193 aa)) is the GATase cobBQ-type domain. The Nucleophile role is filled by C331. H434 is a catalytic residue.

This sequence belongs to the CobB/CobQ family. CobQ subfamily.

Its pathway is cofactor biosynthesis; adenosylcobalamin biosynthesis. Functionally, catalyzes amidations at positions B, D, E, and G on adenosylcobyrinic A,C-diamide. NH(2) groups are provided by glutamine, and one molecule of ATP is hydrogenolyzed for each amidation. This chain is Cobyric acid synthase, found in Variovorax paradoxus (strain S110).